The primary structure comprises 294 residues: MAAASTTSRTNSRVNYSNEIHDLSTVQSGSVVPTLFYPDKSIADIFPPHLGKKVISEVVATFLLVFVTCGAASIYGEDNRRISQLGQSVAGGLIVTVMIYATGHISGAHMNPAVTLSFACFRHFPWIQVPFYWAAQFTGAMCAAFVLKAVLHPIAVIGTTTPSGPHWHALLIEIVVTFNMMFVTCAVATDSRAVGELAGLAVGSAVCITSIFAGPVSGGSMNPARTLAPAVASNVFTGLWIYFLGPVIGTLSGAWVYTYIRFEEAPAAKDTQRLSSFKLRRMQSQLAADEFDTV.

Helical transmembrane passes span 54–74 and 88–108; these read VISE…AASI and SVAG…ISGA. Positions 111 to 113 match the NPA 1 motif; that stretch reads NPA. 3 helical membrane-spanning segments follow: residues 129-151, 169-189, and 197-217; these read VPFY…KAVL, ALLI…AVAT, and LAGL…GPVS. Residues 222-224 carry the NPA 2 motif; it reads NPA. The helical transmembrane segment at 235–255 threads the bilayer; the sequence is VFTGLWIYFLGPVIGTLSGAW.

It belongs to the MIP/aquaporin (TC 1.A.8) family. NIP (TC 1.A.8.12) subfamily.

The protein localises to the membrane. Its function is as follows. Aquaporins facilitate the transport of water and small neutral solutes across cell membranes. The protein is Aquaporin NIP2-2 (NIP2-2) of Zea mays (Maize).